A 243-amino-acid polypeptide reads, in one-letter code: 2-O-methyltransferase NoeI (243 aa).

The protein belongs to the FkbM methyltransferase family.

The protein resides in the cytoplasm. Required for 2-O-methylation of the fucosyl group of Nod factors. The protein is 2-O-methyltransferase NoeI (noeI) of Sinorhizobium fredii (strain NBRC 101917 / NGR234).